The primary structure comprises 101 residues: MTFPLEKALDVMVSTFHKYSGKEGDKFKLNRSELKELLMRELPSFLGKRTDEAAFQKLMSNLDSNRDNEVDFQEYCVFLSCVAMMCNEFFEGFPDKQPRKK.

K7 carries the post-translational modification N6-acetyllysine. EF-hand domains follow at residues 12 to 47 (MVSTFHKYSGKEGDKFKLNRSELKELLMRELPSFLG) and 50 to 85 (TDEAAFQKLMSNLDSNRDNEVDFQEYCVFLSCVAMM). 2 residues coordinate Ca(2+): K28 and E33. K35 is modified (N6-acetyllysine). Ca(2+) contacts are provided by D63, N65, D67, E69, and E74.

Belongs to the S-100 family. As to quaternary structure, homodimer. Interacts with PPFIBP1 in a calcium-dependent mode. Interacts with PGLYRP1; this complex acts as a chemoattractant that promotes lymphocyte movement. Interacts with MYH9; this interaction increases cell motility. Interacts with Annexin 2/ANXA2. Interacts with TP53; this interaction promotes TP53 degradation. Interacts with CCR5 and CXCR3. Interacts with FCGR3A; this interaction inhibits PKC-dependent phosphorylation of FCGR3A.

The protein localises to the secreted. The protein resides in the nucleus. Its subcellular location is the cytoplasm. Functionally, calcium-binding protein that plays a role in various cellular processes including motility, angiogenesis, cell differentiation, apoptosis, and autophagy. Increases cell motility and invasiveness by interacting with non-muscle myosin heavy chain (NMMHC) IIA/MYH9. Mechanistically, promotes filament depolymerization and increases the amount of soluble myosin-IIA, resulting in the formation of stable protrusions facilitating chemotaxis. Also modulates the pro-apoptotic function of TP53 by binding to its C-terminal transactivation domain within the nucleus and reducing its protein levels. Within the extracellular space, stimulates cytokine production including granulocyte colony-stimulating factor and CCL24 from T-lymphocytes. In addition, stimulates T-lymphocyte chemotaxis by acting as a chemoattractant complex with PGLYRP1 that promotes lymphocyte migration via CCR5 and CXCR3 receptors. The polypeptide is Protein S100-A4 (S100A4) (Canis lupus familiaris (Dog)).